A 129-amino-acid polypeptide reads, in one-letter code: Succinate dehydrogenase subunit 3-1, mitochondrial (129 aa).

A mitochondrion-targeting transit peptide spans 1–58; sequence MEKYHSNSRFAPFRDAPFALRGALGSSGSSFSSIDSLRRSSTLEQARGYTSRPLGAVR. A compositionally biased stretch (low complexity) spans 25-35; that stretch reads GSSGSSFSSID. A disordered region spans residues 25-80; the sequence is GSSGSSFSSIDSLRRSSTLEQARGYTSRPLGAVRPKMLPSGCRPLHTSHPLSAPVA. Histidine 87 is a binding site for heme. The chain crosses the membrane as a helical span at residues 105–127; that stretch reads IFGAALGAAIISIPLATKFSLMF.

As to quaternary structure, component of complex II composed of eight subunits in plants: four classical SDH subunits SDH1, SDH2, SDH3 and SDH4 (a flavoprotein (FP), an iron-sulfur protein (IP), and a cytochrome b composed of a large and a small subunit.), as well as four subunits unknown in mitochondria from bacteria and heterotrophic eukaryotes. It depends on heme as a cofactor.

Its subcellular location is the mitochondrion inner membrane. It functions in the pathway carbohydrate metabolism; tricarboxylic acid cycle. Its function is as follows. Membrane-anchoring subunit of succinate dehydrogenase (SDH). The polypeptide is Succinate dehydrogenase subunit 3-1, mitochondrial (Oryza sativa subsp. japonica (Rice)).